Reading from the N-terminus, the 177-residue chain is ATP synthase subunit delta (177 aa).

It belongs to the ATPase delta chain family. In terms of assembly, F-type ATPases have 2 components, F(1) - the catalytic core - and F(0) - the membrane proton channel. F(1) has five subunits: alpha(3), beta(3), gamma(1), delta(1), epsilon(1). F(0) has three main subunits: a(1), b(2) and c(10-14). The alpha and beta chains form an alternating ring which encloses part of the gamma chain. F(1) is attached to F(0) by a central stalk formed by the gamma and epsilon chains, while a peripheral stalk is formed by the delta and b chains.

The protein localises to the cell inner membrane. F(1)F(0) ATP synthase produces ATP from ADP in the presence of a proton or sodium gradient. F-type ATPases consist of two structural domains, F(1) containing the extramembraneous catalytic core and F(0) containing the membrane proton channel, linked together by a central stalk and a peripheral stalk. During catalysis, ATP synthesis in the catalytic domain of F(1) is coupled via a rotary mechanism of the central stalk subunits to proton translocation. Functionally, this protein is part of the stalk that links CF(0) to CF(1). It either transmits conformational changes from CF(0) to CF(1) or is implicated in proton conduction. The sequence is that of ATP synthase subunit delta from Vibrio cholerae serotype O1 (strain ATCC 39541 / Classical Ogawa 395 / O395).